We begin with the raw amino-acid sequence, 588 residues long: DNA ligase (588 aa).

Glutamate 248 is a binding site for ATP. Lysine 250 functions as the N6-AMP-lysine intermediate in the catalytic mechanism. Positions 255, 270, 300, 341, 418, and 424 each coordinate ATP.

The protein belongs to the ATP-dependent DNA ligase family. The cofactor is Mg(2+).

The catalysed reaction is ATP + (deoxyribonucleotide)n-3'-hydroxyl + 5'-phospho-(deoxyribonucleotide)m = (deoxyribonucleotide)n+m + AMP + diphosphate.. Functionally, DNA ligase that seals nicks in double-stranded DNA during DNA replication, DNA recombination and DNA repair. In Thermoplasma volcanium (strain ATCC 51530 / DSM 4299 / JCM 9571 / NBRC 15438 / GSS1), this protein is DNA ligase.